The primary structure comprises 96 residues: Cysteine protease immunity 1 (96 aa).

This is Cysteine protease immunity 1 from Escherichia coli O1:K1:H7 (strain ATCC 11775 / DSM 30083 / JCM 1649 / NBRC 102203 / NCTC 9001 / U5/41).